We begin with the raw amino-acid sequence, 124 residues long: Small ribosomal subunit protein uS12 (124 aa).

Asp89 carries the post-translational modification 3-methylthioaspartic acid.

The protein belongs to the universal ribosomal protein uS12 family. In terms of assembly, part of the 30S ribosomal subunit. Contacts proteins S8 and S17. May interact with IF1 in the 30S initiation complex.

With S4 and S5 plays an important role in translational accuracy. Its function is as follows. Interacts with and stabilizes bases of the 16S rRNA that are involved in tRNA selection in the A site and with the mRNA backbone. Located at the interface of the 30S and 50S subunits, it traverses the body of the 30S subunit contacting proteins on the other side and probably holding the rRNA structure together. The combined cluster of proteins S8, S12 and S17 appears to hold together the shoulder and platform of the 30S subunit. This is Small ribosomal subunit protein uS12 from Photobacterium profundum (strain SS9).